The sequence spans 291 residues: Phytanoyl-CoA dioxygenase domain-containing protein 1 (291 aa).

Thr-55 carries the phosphothreonine modification. 2-oxoglutarate contacts are provided by residues Lys-102, Met-141, 156-158 (HQD), and Trp-174. 2 residues coordinate Fe cation: His-156 and Asp-158. His-246 contributes to the Fe cation binding site. 2-oxoglutarate-binding residues include Ser-248 and Arg-257.

Belongs to the PhyH family. PHYHD1 subfamily. Fe cation is required as a cofactor.

2-oxoglutarate(2OG)-dependent dioxygenase that catalyzes the conversion of 2-oxoglutarate to succinate and CO(2) in an iron-dependent manner. However, does not couple 2OG turnover to the hydroxylation of acyl-coenzyme A derivatives, implying that it is not directly involved in phytanoyl coenzyme-A metabolism. Does not show detectable activity towards fatty acid CoA thioesters. The chain is Phytanoyl-CoA dioxygenase domain-containing protein 1 from Mus musculus (Mouse).